The chain runs to 158 residues: ATP synthase subunit b', chloroplastic (158 aa).

A helical transmembrane segment spans residues 21 to 41 (GTLPLMALQFLILMLLLNTIF).

Belongs to the ATPase B chain family. As to quaternary structure, F-type ATPases have 2 components, F(1) - the catalytic core - and F(0) - the membrane proton channel. F(1) has five subunits: alpha(3), beta(3), gamma(1), delta(1), epsilon(1). F(0) has four main subunits: a(1), b(1), b'(1) and c(10-14). The alpha and beta chains form an alternating ring which encloses part of the gamma chain. F(1) is attached to F(0) by a central stalk formed by the gamma and epsilon chains, while a peripheral stalk is formed by the delta, b and b' chains.

The protein localises to the plastid. Its subcellular location is the chloroplast thylakoid membrane. Its function is as follows. F(1)F(0) ATP synthase produces ATP from ADP in the presence of a proton or sodium gradient. F-type ATPases consist of two structural domains, F(1) containing the extramembraneous catalytic core and F(0) containing the membrane proton channel, linked together by a central stalk and a peripheral stalk. During catalysis, ATP synthesis in the catalytic domain of F(1) is coupled via a rotary mechanism of the central stalk subunits to proton translocation. Component of the F(0) channel, it forms part of the peripheral stalk, linking F(1) to F(0). The b'-subunit is a diverged and duplicated form of b found in plants and photosynthetic bacteria. This Porphyra purpurea (Red seaweed) protein is ATP synthase subunit b', chloroplastic.